The primary structure comprises 37 residues: MKVRASVKKMCRNCKIVKREGVVRVLCSDPKHKQRQG.

The protein belongs to the bacterial ribosomal protein bL36 family.

The polypeptide is Large ribosomal subunit protein bL36 (Histophilus somni (strain 129Pt) (Haemophilus somnus)).